Here is a 1064-residue protein sequence, read N- to C-terminus: Lethal(2) giant larvae protein homolog 1 (1064 aa).

WD repeat units lie at residues 38 to 71 (SALA…FTGL), 78 to 119 (VTQM…ALSF), 139 to 176 (VTVV…GQTL), 200 to 234 (SLQG…DHIF), 240 to 272 (LESL…GSFP), 290 to 332 (AINK…ETLV), 340 to 374 (IIDF…VLDL), 396 to 474 (TCSA…YKLS), 518 to 593 (QKVA…RVLV), 602 to 663 (TAVT…LRQS), 723 to 783 (VRCL…KEVQ), 792 to 844 (AIAV…VSAK), 849 to 902 (LTAH…VHYS), and 916 to 939 (VFTR…SLSA). Residue Ser-663 is modified to Phosphoserine. Thr-958 is modified (phosphothreonine). The segment at 966–1010 (ESPKLSQANGTPSILLAPQSLDGSPDPAHSMGPDTPEPPEAALSP) is disordered. Ser-967 and Ser-985 each carry phosphoserine.

It belongs to the WD repeat L(2)GL family. As to quaternary structure, associated with nonmuscle myosin II heavy chain. Interacts with PRKCI/aPKC, PARD6B/Par-6 and PARD6A. Interacts with STX4A. Interacts with RAB10 (GDP-bound form); the interaction is direct and promotes RAB10 association with membranes and activation through competition with the Rab inhibitor GDI1. Interacts with DCAF1. Phosphorylated at least at Ser-663 by PRKCI. Expressed in brain, kidney, and muscle but is barely seen in heart and placenta. Down-regulated or lost in all cell lines and in most of the tumor samples analyzed. Loss was associated with advanced stage of the disease.

Its subcellular location is the early endosome membrane. The protein resides in the golgi apparatus. It is found in the trans-Golgi network membrane. It localises to the golgi apparatus membrane. The protein localises to the cell projection. Its subcellular location is the axon. The protein resides in the cytoplasm. It is found in the cytoskeleton. Functionally, cortical cytoskeleton protein found in a complex involved in maintaining cell polarity and epithelial integrity. Involved in the regulation of mitotic spindle orientation, proliferation, differentiation and tissue organization of neuroepithelial cells. Involved in axonogenesis through RAB10 activation thereby regulating vesicular membrane trafficking toward the axonal plasma membrane. This chain is Lethal(2) giant larvae protein homolog 1 (LLGL1), found in Homo sapiens (Human).